The primary structure comprises 115 residues: Large ribosomal subunit protein bL19 (115 aa).

Belongs to the bacterial ribosomal protein bL19 family.

This protein is located at the 30S-50S ribosomal subunit interface and may play a role in the structure and function of the aminoacyl-tRNA binding site. The polypeptide is Large ribosomal subunit protein bL19 (Streptococcus pyogenes serotype M49 (strain NZ131)).